Here is a 225-residue protein sequence, read N- to C-terminus: Large ribosomal subunit protein uL1 (225 aa).

This sequence belongs to the universal ribosomal protein uL1 family. As to quaternary structure, part of the 50S ribosomal subunit.

Functionally, binds directly to 23S rRNA. Probably involved in E site tRNA release. Protein L1 is also a translational repressor protein, it controls the translation of its operon by binding to its mRNA. The chain is Large ribosomal subunit protein uL1 from Thermofilum pendens (strain DSM 2475 / Hrk 5).